A 390-amino-acid chain; its full sequence is 8-amino-7-oxononanoate synthase (390 aa).

R19 contacts substrate. Position 106–107 (106–107 (GY)) interacts with pyridoxal 5'-phosphate. Substrate is bound at residue H131. Pyridoxal 5'-phosphate contacts are provided by S176, H204, and T233. K236 is subject to N6-(pyridoxal phosphate)lysine. A substrate-binding site is contributed by T350.

It belongs to the class-II pyridoxal-phosphate-dependent aminotransferase family. BioF subfamily. As to quaternary structure, homodimer. Pyridoxal 5'-phosphate serves as cofactor.

It catalyses the reaction 6-carboxyhexanoyl-[ACP] + L-alanine + H(+) = (8S)-8-amino-7-oxononanoate + holo-[ACP] + CO2. It functions in the pathway cofactor biosynthesis; biotin biosynthesis. Catalyzes the decarboxylative condensation of pimeloyl-[acyl-carrier protein] and L-alanine to produce 8-amino-7-oxononanoate (AON), [acyl-carrier protein], and carbon dioxide. The polypeptide is 8-amino-7-oxononanoate synthase (Pseudomonas putida (strain ATCC 47054 / DSM 6125 / CFBP 8728 / NCIMB 11950 / KT2440)).